We begin with the raw amino-acid sequence, 535 residues long: Ribonuclease Y (535 aa).

A helical membrane pass occupies residues 4–24 (IILLIVSALIGLILGYALISI). Residues 118-141 (ENLSSKEKVLDSKEQSLTDKSKHI) form a disordered region. The KH domain occupies 225 to 285 (TITSVHLPDD…IRREIARMTL (61 aa)). The HD domain maps to 351–444 (VLRHSVEVGK…VAAADALSSA (94 aa)).

Belongs to the RNase Y family.

It is found in the cell membrane. Endoribonuclease that initiates mRNA decay. The sequence is that of Ribonuclease Y from Streptococcus pyogenes serotype M18 (strain MGAS8232).